The following is a 267-amino-acid chain: Tryptophan synthase alpha chain (267 aa).

Active-site proton acceptor residues include glutamate 49 and aspartate 60.

This sequence belongs to the TrpA family. Tetramer of two alpha and two beta chains.

The catalysed reaction is (1S,2R)-1-C-(indol-3-yl)glycerol 3-phosphate + L-serine = D-glyceraldehyde 3-phosphate + L-tryptophan + H2O. It participates in amino-acid biosynthesis; L-tryptophan biosynthesis; L-tryptophan from chorismate: step 5/5. Functionally, the alpha subunit is responsible for the aldol cleavage of indoleglycerol phosphate to indole and glyceraldehyde 3-phosphate. The polypeptide is Tryptophan synthase alpha chain (Chloroflexus aggregans (strain MD-66 / DSM 9485)).